We begin with the raw amino-acid sequence, 417 residues long: Exodeoxyribonuclease 7 large subunit (417 aa).

This sequence belongs to the XseA family. In terms of assembly, heterooligomer composed of large and small subunits.

It is found in the cytoplasm. The catalysed reaction is Exonucleolytic cleavage in either 5'- to 3'- or 3'- to 5'-direction to yield nucleoside 5'-phosphates.. Its function is as follows. Bidirectionally degrades single-stranded DNA into large acid-insoluble oligonucleotides, which are then degraded further into small acid-soluble oligonucleotides. This is Exodeoxyribonuclease 7 large subunit from Lactococcus lactis subsp. lactis (strain IL1403) (Streptococcus lactis).